Reading from the N-terminus, the 390-residue chain is Ribonuclease D (390 aa).

In terms of domain architecture, 3'-5' exonuclease spans 7-173 (ITDSATLAAL…TLFPMLLKEL (167 aa)). The HRDC domain maps to 212-293 (KADILGRLKA…ENAEALRPEE (82 aa)).

Belongs to the RNase D family. The cofactor is a divalent metal cation.

It localises to the cytoplasm. It catalyses the reaction Exonucleolytic cleavage that removes extra residues from the 3'-terminus of tRNA to produce 5'-mononucleotides.. Functionally, exonuclease involved in the 3' processing of various precursor tRNAs. Initiates hydrolysis at the 3'-terminus of an RNA molecule and releases 5'-mononucleotides. The sequence is that of Ribonuclease D from Zymomonas mobilis subsp. mobilis (strain ATCC 31821 / ZM4 / CP4).